A 543-amino-acid chain; its full sequence is Proline--tRNA ligase, chloroplastic/mitochondrial (543 aa).

Positions 41-63 (ATAPSGTASPETKSSEVDRLRSD) are disordered. Positions 53-63 (KSSEVDRLRSD) are enriched in basic and acidic residues.

Belongs to the class-II aminoacyl-tRNA synthetase family.

Its subcellular location is the plastid. The protein localises to the chloroplast. The protein resides in the mitochondrion. It catalyses the reaction tRNA(Pro) + L-proline + ATP = L-prolyl-tRNA(Pro) + AMP + diphosphate. In terms of biological role, catalyzes the attachment of proline to tRNA(Pro) in a two-step reaction: proline is first activated by ATP to form Pro-AMP and then transferred to the acceptor end of tRNA(Pro). The protein is Proline--tRNA ligase, chloroplastic/mitochondrial of Arabidopsis thaliana (Mouse-ear cress).